Here is a 145-residue protein sequence, read N- to C-terminus: Large ribosomal subunit protein uL13 (145 aa).

The interval 72 to 91 (DKMYHRHSNHPGGLKSISAG) is disordered.

It belongs to the universal ribosomal protein uL13 family. As to quaternary structure, part of the 50S ribosomal subunit.

This protein is one of the early assembly proteins of the 50S ribosomal subunit, although it is not seen to bind rRNA by itself. It is important during the early stages of 50S assembly. The protein is Large ribosomal subunit protein uL13 of Staphylococcus epidermidis (strain ATCC 12228 / FDA PCI 1200).